Here is a 95-residue protein sequence, read N- to C-terminus: Exodeoxyribonuclease 7 small subunit (95 aa).

It belongs to the XseB family. As to quaternary structure, heterooligomer composed of large and small subunits.

The protein localises to the cytoplasm. The enzyme catalyses Exonucleolytic cleavage in either 5'- to 3'- or 3'- to 5'-direction to yield nucleoside 5'-phosphates.. Its function is as follows. Bidirectionally degrades single-stranded DNA into large acid-insoluble oligonucleotides, which are then degraded further into small acid-soluble oligonucleotides. In Corynebacterium aurimucosum (strain ATCC 700975 / DSM 44827 / CIP 107346 / CN-1) (Corynebacterium nigricans), this protein is Exodeoxyribonuclease 7 small subunit.